We begin with the raw amino-acid sequence, 360 residues long: UDP-N-acetylglucosamine--N-acetylmuramyl-(pentapeptide) pyrophosphoryl-undecaprenol N-acetylglucosamine transferase (360 aa).

UDP-N-acetyl-alpha-D-glucosamine is bound by residues Ser198 and Gln289.

It belongs to the glycosyltransferase 28 family. MurG subfamily.

It is found in the cell membrane. The catalysed reaction is Mur2Ac(oyl-L-Ala-gamma-D-Glu-L-Lys-D-Ala-D-Ala)-di-trans,octa-cis-undecaprenyl diphosphate + UDP-N-acetyl-alpha-D-glucosamine = beta-D-GlcNAc-(1-&gt;4)-Mur2Ac(oyl-L-Ala-gamma-D-Glu-L-Lys-D-Ala-D-Ala)-di-trans,octa-cis-undecaprenyl diphosphate + UDP + H(+). It functions in the pathway cell wall biogenesis; peptidoglycan biosynthesis. Functionally, cell wall formation. Catalyzes the transfer of a GlcNAc subunit on undecaprenyl-pyrophosphoryl-MurNAc-pentapeptide (lipid intermediate I) to form undecaprenyl-pyrophosphoryl-MurNAc-(pentapeptide)GlcNAc (lipid intermediate II). In Streptococcus pyogenes serotype M5 (strain Manfredo), this protein is UDP-N-acetylglucosamine--N-acetylmuramyl-(pentapeptide) pyrophosphoryl-undecaprenol N-acetylglucosamine transferase.